We begin with the raw amino-acid sequence, 147 residues long: uncharacterized protein (147 aa).

The segment at 30–102 is disordered; the sequence is GRCEQVALSS…TPPTRPESIF (73 aa). Over residues 62 to 71 the composition is skewed to polar residues; sequence RPSTGETFVQ.

This is an uncharacterized protein from Homo sapiens (Human).